The primary structure comprises 55 residues: Metallothionein-1 (55 aa).

This sequence belongs to the metallothionein superfamily. Type 11 family.

This chain is Metallothionein-1 (MTP1), found in Yarrowia lipolytica (strain CLIB 122 / E 150) (Yeast).